The chain runs to 443 residues: ATP-dependent protease ATPase subunit HslU (443 aa).

Residues I18, 60–65 (GVGKTE), D256, E321, and R393 each bind ATP.

The protein belongs to the ClpX chaperone family. HslU subfamily. A double ring-shaped homohexamer of HslV is capped on each side by a ring-shaped HslU homohexamer. The assembly of the HslU/HslV complex is dependent on binding of ATP.

Its subcellular location is the cytoplasm. Its function is as follows. ATPase subunit of a proteasome-like degradation complex; this subunit has chaperone activity. The binding of ATP and its subsequent hydrolysis by HslU are essential for unfolding of protein substrates subsequently hydrolyzed by HslV. HslU recognizes the N-terminal part of its protein substrates and unfolds these before they are guided to HslV for hydrolysis. The polypeptide is ATP-dependent protease ATPase subunit HslU (Nitrosospira multiformis (strain ATCC 25196 / NCIMB 11849 / C 71)).